A 180-amino-acid chain; its full sequence is ATP synthase subunit delta (180 aa).

This sequence belongs to the ATPase delta chain family. F-type ATPases have 2 components, F(1) - the catalytic core - and F(0) - the membrane proton channel. F(1) has five subunits: alpha(3), beta(3), gamma(1), delta(1), epsilon(1). F(0) has three main subunits: a(1), b(2) and c(10-14). The alpha and beta chains form an alternating ring which encloses part of the gamma chain. F(1) is attached to F(0) by a central stalk formed by the gamma and epsilon chains, while a peripheral stalk is formed by the delta and b chains.

The protein resides in the cell membrane. F(1)F(0) ATP synthase produces ATP from ADP in the presence of a proton or sodium gradient. F-type ATPases consist of two structural domains, F(1) containing the extramembraneous catalytic core and F(0) containing the membrane proton channel, linked together by a central stalk and a peripheral stalk. During catalysis, ATP synthesis in the catalytic domain of F(1) is coupled via a rotary mechanism of the central stalk subunits to proton translocation. In terms of biological role, this protein is part of the stalk that links CF(0) to CF(1). It either transmits conformational changes from CF(0) to CF(1) or is implicated in proton conduction. In Bacillus cereus (strain 03BB102), this protein is ATP synthase subunit delta.